We begin with the raw amino-acid sequence, 254 residues long: Triosephosphate isomerase (254 aa).

12-14 (NWK) contacts substrate. The active-site Electrophile is the histidine 99. The active-site Proton acceptor is the glutamate 169. Substrate is bound by residues glycine 175, serine 214, and 235–236 (GG).

Belongs to the triosephosphate isomerase family. In terms of assembly, homodimer.

The protein localises to the cytoplasm. It carries out the reaction D-glyceraldehyde 3-phosphate = dihydroxyacetone phosphate. It functions in the pathway carbohydrate biosynthesis; gluconeogenesis. It participates in carbohydrate degradation; glycolysis; D-glyceraldehyde 3-phosphate from glycerone phosphate: step 1/1. Functionally, involved in the gluconeogenesis. Catalyzes stereospecifically the conversion of dihydroxyacetone phosphate (DHAP) to D-glyceraldehyde-3-phosphate (G3P). This Bartonella tribocorum (strain CIP 105476 / IBS 506) protein is Triosephosphate isomerase.